Consider the following 431-residue polypeptide: Na(+)-translocating NADH-quinone reductase subunit F (431 aa).

Residues 10–30 (IFVASAAFCSLGLILVAVILL) traverse the membrane as a helical segment. The 2Fe-2S ferredoxin-type domain maps to 41–133 (CKLKINNDDS…DLCLEVEERY (93 aa)). Positions 76, 82, 85, and 117 each coordinate [2Fe-2S] cluster. Residues 136–286 (ASSWEGTVVS…SGPYGESFMK (151 aa)) form the FAD-binding FR-type domain.

This sequence belongs to the NqrF family. Composed of six subunits; NqrA, NqrB, NqrC, NqrD, NqrE and NqrF. It depends on [2Fe-2S] cluster as a cofactor. Requires FAD as cofactor.

It is found in the cell inner membrane. It carries out the reaction a ubiquinone + n Na(+)(in) + NADH + H(+) = a ubiquinol + n Na(+)(out) + NAD(+). NQR complex catalyzes the reduction of ubiquinone-1 to ubiquinol by two successive reactions, coupled with the transport of Na(+) ions from the cytoplasm to the periplasm. The first step is catalyzed by NqrF, which accepts electrons from NADH and reduces ubiquinone-1 to ubisemiquinone by a one-electron transfer pathway. The protein is Na(+)-translocating NADH-quinone reductase subunit F of Chlamydia trachomatis serovar A (strain ATCC VR-571B / DSM 19440 / HAR-13).